Reading from the N-terminus, the 352-residue chain is Rhodopsin (352 aa).

The Extracellular segment spans residues 1–36 (MNGTEGPFFYIPMVNTTGIVRSPYEYPQYYLVNPAA). Asn2 and Asn15 each carry an N-linked (GlcNAc...) asparagine glycan. The helical transmembrane segment at 37–61 (YACLGAYMFFLILVGFPVNFLTLYV) threads the bilayer. Residues 62-73 (TLEHKKLRTPLN) lie on the Cytoplasmic side of the membrane. Residues 74–96 (YILLNLAVADLFMVFGGFTTTMY) traverse the membrane as a helical segment. Topologically, residues 97–110 (TSMHGYFVLGRLGC) are extracellular. Cys110 and Cys187 are oxidised to a cystine. The chain crosses the membrane as a helical span at residues 111-133 (NIEGFFATLGGEIALWSLVVLAI). The 'Ionic lock' involved in activated form stabilization signature appears at 134 to 136 (ERW). Topologically, residues 134-152 (ERWVVVCKPISNFRFGENH) are cytoplasmic. A helical transmembrane segment spans residues 153-173 (AIMGVAFTWFMASACAVPPLV). The Extracellular portion of the chain corresponds to 174–202 (GWSRYIPEGMQCSCGVDYYTRAEGFNNES). Asn200 carries an N-linked (GlcNAc...) asparagine glycan. Residues 203 to 224 (FVIYMFIVHFCIPLAVVGFCYG) traverse the membrane as a helical segment. The Cytoplasmic segment spans residues 225–252 (RLLCAVKEAAAAQQESETTQRAEREVSR). Residues 253 to 274 (MVVIMVIGFLVCWLPYASVAWY) traverse the membrane as a helical segment. The Extracellular segment spans residues 275 to 286 (IFTHQGSEFGPP). The chain crosses the membrane as a helical span at residues 287-308 (FMTVPAFFAKSSSIYNPMIYIC). N6-(retinylidene)lysine is present on Lys296. The Cytoplasmic portion of the chain corresponds to 309 to 352 (MNKQFRHCMITTLCCGKNPFEEEEGASTTKTEASSVSSSSVSPA). Residues Cys322 and Cys323 are each lipidated (S-palmitoyl cysteine). Residues 331–352 (EEGASTTKTEASSVSSSSVSPA) form a disordered region. Residues 342–352 (SSVSSSSVSPA) show a composition bias toward low complexity.

It belongs to the G-protein coupled receptor 1 family. Opsin subfamily. In terms of processing, phosphorylated on some or all of the serine and threonine residues present in the C-terminal region. Post-translationally, contains one covalently linked retinal chromophore.

It is found in the membrane. The protein resides in the cell projection. The protein localises to the cilium. Its subcellular location is the photoreceptor outer segment. Functionally, photoreceptor required for image-forming vision at low light intensity. While most salt water fish species use retinal as chromophore, most freshwater fish use 3-dehydroretinal, or a mixture of retinal and 3-dehydroretinal. Light-induced isomerization of 11-cis to all-trans retinal triggers a conformational change that activates signaling via G-proteins. Subsequent receptor phosphorylation mediates displacement of the bound G-protein alpha subunit by arrestin and terminates signaling. This is Rhodopsin (rho) from Zosterisessor ophiocephalus (Grass goby).